The chain runs to 414 residues: Tryptophan synthase beta chain (414 aa).

Positions 1–26 are disordered; the sequence is MVSTFSRKNQNYKKDDLNQPSKDGRF. Positions 12–26 are enriched in basic and acidic residues; sequence YKKDDLNQPSKDGRF. K109 bears the N6-(pyridoxal phosphate)lysine mark.

It belongs to the TrpB family. Tetramer of two alpha and two beta chains. Pyridoxal 5'-phosphate is required as a cofactor.

The catalysed reaction is (1S,2R)-1-C-(indol-3-yl)glycerol 3-phosphate + L-serine = D-glyceraldehyde 3-phosphate + L-tryptophan + H2O. It participates in amino-acid biosynthesis; L-tryptophan biosynthesis; L-tryptophan from chorismate: step 5/5. Its function is as follows. The beta subunit is responsible for the synthesis of L-tryptophan from indole and L-serine. This chain is Tryptophan synthase beta chain, found in Prochlorococcus marinus (strain MIT 9215).